The sequence spans 75 residues: MGGFSIWHWLIVLVIVLLVFGTKRLTSGAKDLGSAVKEFKKGMHDDDKPAGKLGDDSRTAEQAREAQAERDRDAR.

Residues 1 to 21 (MGGFSIWHWLIVLVIVLLVFG) traverse the membrane as a helical segment. The interval 41-75 (KGMHDDDKPAGKLGDDSRTAEQAREAQAERDRDAR) is disordered.

It belongs to the TatA/E family. The Tat system comprises two distinct complexes: a TatABC complex, containing multiple copies of TatA, TatB and TatC subunits, and a separate TatA complex, containing only TatA subunits. Substrates initially bind to the TatABC complex, which probably triggers association of the separate TatA complex to form the active translocon.

The protein localises to the cell inner membrane. Functionally, part of the twin-arginine translocation (Tat) system that transports large folded proteins containing a characteristic twin-arginine motif in their signal peptide across membranes. TatA could form the protein-conducting channel of the Tat system. The protein is Sec-independent protein translocase protein TatA of Xanthomonas axonopodis pv. citri (strain 306).